The sequence spans 285 residues: Elongation factor Ts (285 aa).

Positions 75–78 are involved in Mg(2+) ion dislocation from EF-Tu; the sequence is TDFV.

Belongs to the EF-Ts family.

The protein resides in the cytoplasm. Its function is as follows. Associates with the EF-Tu.GDP complex and induces the exchange of GDP to GTP. It remains bound to the aminoacyl-tRNA.EF-Tu.GTP complex up to the GTP hydrolysis stage on the ribosome. This is Elongation factor Ts from Alcanivorax borkumensis (strain ATCC 700651 / DSM 11573 / NCIMB 13689 / SK2).